A 287-amino-acid polypeptide reads, in one-letter code: MLVARTKKELLDALTPLHTQQRSIGLVPTMGALHSGHASLVAKAREENDVVVTSIFVNPLQFEALGDCDDYRNYPRQLDADVALLEAEGVDVVFAPDVEEMYGPTGLPMLWVRTGEMGERLEGASRPGHFDGVATVVAKLFNLVRPDRAYFGQKDAQQVAVIRRLVRDLDFPLEIRAVPIIRAADGLAESSRNQRLSGADRAAALVLPRVLFDLEERAATGQPLDIEGARAQLRAAQGVRLDHLELVDAATLEPLTVTGALDRPALVVAAIHVGQVRLIDNIELTPR.

30 to 37 (MGALHSGH) lines the ATP pocket. The active-site Proton donor is the His37. Gln61 is a (R)-pantoate binding site. Gln61 lines the beta-alanine pocket. Position 152 to 155 (152 to 155 (GQKD)) interacts with ATP. Gln158 serves as a coordination point for (R)-pantoate. ATP contacts are provided by residues Ile181 and 189 to 192 (ESSR).

Belongs to the pantothenate synthetase family. As to quaternary structure, homodimer.

It is found in the cytoplasm. It catalyses the reaction (R)-pantoate + beta-alanine + ATP = (R)-pantothenate + AMP + diphosphate + H(+). The protein operates within cofactor biosynthesis; (R)-pantothenate biosynthesis; (R)-pantothenate from (R)-pantoate and beta-alanine: step 1/1. Catalyzes the condensation of pantoate with beta-alanine in an ATP-dependent reaction via a pantoyl-adenylate intermediate. The sequence is that of Pantothenate synthetase from Corynebacterium efficiens (strain DSM 44549 / YS-314 / AJ 12310 / JCM 11189 / NBRC 100395).